The chain runs to 720 residues: Photosystem I P700 chlorophyll a apoprotein A1 (720 aa).

8 consecutive transmembrane segments (helical) span residues 62–85, 148–171, 186–210, 282–300, 337–360, 376–402, 424–446, and 522–540; these read IFSA…FHGA, LYCT…FHYH, LNHH…HVSL, IVHH…GHMY, WHAQ…HHMY, LSLF…IFLV, AIIS…LYIH, and FLVH…LILL. [4Fe-4S] cluster-binding residues include Cys564 and Cys573. 2 helical membrane passes run 580–601 and 655–677; these read HVFL…HFSW and LSAY…MFLF. His666 lines the chlorophyll a' pocket. 2 residues coordinate chlorophyll a: Met674 and Tyr682. Trp683 is a phylloquinone binding site. Residues 715–720 form a helical membrane-spanning segment; the sequence is AVGVAH.

Belongs to the PsaA/PsaB family. The PsaA/B heterodimer binds the P700 chlorophyll special pair and subsequent electron acceptors. PSI consists of a core antenna complex that captures photons, and an electron transfer chain that converts photonic excitation into a charge separation. The eukaryotic PSI reaction center is composed of at least 11 subunits. It depends on P700 is a chlorophyll a/chlorophyll a' dimer, A0 is one or more chlorophyll a, A1 is one or both phylloquinones and FX is a shared 4Fe-4S iron-sulfur center. as a cofactor.

The protein resides in the plastid. It is found in the chloroplast thylakoid membrane. It catalyses the reaction reduced [plastocyanin] + hnu + oxidized [2Fe-2S]-[ferredoxin] = oxidized [plastocyanin] + reduced [2Fe-2S]-[ferredoxin]. PsaA and PsaB bind P700, the primary electron donor of photosystem I (PSI), as well as the electron acceptors A0, A1 and FX. PSI is a plastocyanin-ferredoxin oxidoreductase, converting photonic excitation into a charge separation, which transfers an electron from the donor P700 chlorophyll pair to the spectroscopically characterized acceptors A0, A1, FX, FA and FB in turn. Oxidized P700 is reduced on the lumenal side of the thylakoid membrane by plastocyanin. The polypeptide is Photosystem I P700 chlorophyll a apoprotein A1 (Ephedra tweediana (Vining horsetail)).